The sequence spans 298 residues: N-acetylmuramic acid 6-phosphate etherase 2 (298 aa).

In terms of domain architecture, SIS spans 51–214 (IVSRFEQGGR…STAAMVRLGR (164 aa)). The Proton donor role is filled by Glu-79. Glu-110 is a catalytic residue.

This sequence belongs to the GCKR-like family. MurNAc-6-P etherase subfamily. In terms of assembly, homodimer.

The catalysed reaction is N-acetyl-D-muramate 6-phosphate + H2O = N-acetyl-D-glucosamine 6-phosphate + (R)-lactate. It participates in amino-sugar metabolism; N-acetylmuramate degradation. Its function is as follows. Specifically catalyzes the cleavage of the D-lactyl ether substituent of MurNAc 6-phosphate, producing GlcNAc 6-phosphate and D-lactate. The sequence is that of N-acetylmuramic acid 6-phosphate etherase 2 from Bacillus licheniformis (strain ATCC 14580 / DSM 13 / JCM 2505 / CCUG 7422 / NBRC 12200 / NCIMB 9375 / NCTC 10341 / NRRL NRS-1264 / Gibson 46).